A 285-amino-acid polypeptide reads, in one-letter code: Acetyl-coenzyme A carboxylase carboxyl transferase subunit beta (285 aa).

The CoA carboxyltransferase N-terminal domain occupies 29–285; sequence IMTKCPKCKK…ILKIHQEVTK (257 aa). Zn(2+)-binding residues include C33, C36, C52, and C55. The segment at 33–55 adopts a C4-type zinc-finger fold; it reads CPKCKKIMYTKELAENLNVCFNC.

It belongs to the AccD/PCCB family. In terms of assembly, acetyl-CoA carboxylase is a heterohexamer composed of biotin carboxyl carrier protein (AccB), biotin carboxylase (AccC) and two subunits each of ACCase subunit alpha (AccA) and ACCase subunit beta (AccD). Zn(2+) serves as cofactor.

The protein localises to the cytoplasm. The enzyme catalyses N(6)-carboxybiotinyl-L-lysyl-[protein] + acetyl-CoA = N(6)-biotinyl-L-lysyl-[protein] + malonyl-CoA. Its pathway is lipid metabolism; malonyl-CoA biosynthesis; malonyl-CoA from acetyl-CoA: step 1/1. Its function is as follows. Component of the acetyl coenzyme A carboxylase (ACC) complex. Biotin carboxylase (BC) catalyzes the carboxylation of biotin on its carrier protein (BCCP) and then the CO(2) group is transferred by the transcarboxylase to acetyl-CoA to form malonyl-CoA. In Staphylococcus aureus (strain MSSA476), this protein is Acetyl-coenzyme A carboxylase carboxyl transferase subunit beta.